The primary structure comprises 217 residues: GRB2-related adapter protein (217 aa).

The 58-residue stretch at methionine 1 to histidine 58 folds into the SH3 1 domain. Positions tryptophan 60–leucine 154 constitute an SH2 domain. In terms of domain architecture, SH3 2 spans proline 158–leucine 217.

Belongs to the GRB2/sem-5/DRK family. Associates through its SH2 domain with ligand-activated receptors for stem cell factor (KIT) and erythropoietin (EPOR). Also forms a stable complex with the Bcr-Abl oncoprotein. GRAP is associated with the Ras guanine nucleotide exchange factor SOS1, primarily through its N-terminal SH3 domain. Interacts with phosphorylated LAT upon TCR activation. Interacts with SHB.

Its subcellular location is the membrane. The protein localises to the synapse. In terms of biological role, couples signals from receptor and cytoplasmic tyrosine kinases to the Ras signaling pathway. Plays a role in the inner ear and in hearing. The sequence is that of GRB2-related adapter protein from Homo sapiens (Human).